We begin with the raw amino-acid sequence, 326 residues long: MTTISAKAVSELRKSTGAGMMDCKKALEESGGDLDGAMDYLRKKGQKVAAKRADREASEGVVAAVVEGNKGLLLSLGCETDFVAKNEAFIELTNTIAKMAFDADCKTIDDVNALEIDGTTVKERLVNETGKVGEKIEVTNLEVVEGENLASYIHAGAKIGVLVSYKDGAKDDADQFFRGVSMHIAAMKPSILHPNEFDEEFVQKETEALQAQINAENELNEKENLGKPMKNVPQFASRRQLTPEVLAATEEAIKEELKAEGKPEKIWDKIVPGKLERFIADNTLLDQERCLLSQFYALDDTKTVEAAIKEFHPEAEVVAFKRISVN.

The tract at residues 80 to 83 is involved in Mg(2+) ion dislocation from EF-Tu; that stretch reads TDFV.

This sequence belongs to the EF-Ts family.

It localises to the cytoplasm. Functionally, associates with the EF-Tu.GDP complex and induces the exchange of GDP to GTP. It remains bound to the aminoacyl-tRNA.EF-Tu.GTP complex up to the GTP hydrolysis stage on the ribosome. In Rhodopirellula baltica (strain DSM 10527 / NCIMB 13988 / SH1), this protein is Elongation factor Ts.